Reading from the N-terminus, the 377-residue chain is Endoplasmic reticulum-Golgi intermediate compartment protein 2 (377 aa).

Over methionine 1–glycine 33 the chain is Cytoplasmic. A helical membrane pass occupies residues glycine 34 to valine 54. Topologically, residues tyrosine 55–cysteine 319 are lumenal. The chain crosses the membrane as a helical span at residues glycine 320–valine 340. At glutamate 341–histidine 377 the chain is on the cytoplasmic side.

The protein belongs to the ERGIC family. As to quaternary structure, may form a heteromeric complex composed of ERGIC1, ERGIC2 and ERGIC3. Interacts with ERGIC3, the interaction is required for the stable expression of both proteins. May interact with EEF1A1.

It localises to the endoplasmic reticulum-Golgi intermediate compartment membrane. The protein resides in the golgi apparatus. The protein localises to the cis-Golgi network membrane. It is found in the endoplasmic reticulum membrane. Its subcellular location is the cytoplasm. It localises to the nucleus. Its function is as follows. Possible role in transport between endoplasmic reticulum and Golgi. The protein is Endoplasmic reticulum-Golgi intermediate compartment protein 2 (ERGIC2) of Macaca fascicularis (Crab-eating macaque).